The following is a 290-amino-acid chain: Acetyl-coenzyme A carboxylase carboxyl transferase subunit beta (290 aa).

A CoA carboxyltransferase N-terminal domain is found at 28-290 (IMTKCPKCKK…TGGDIEWLQD (263 aa)). Positions 32, 35, 51, and 54 each coordinate Zn(2+). Residues 32 to 54 (CPKCKKIMLTKELDKNMRVCMNC) form a C4-type zinc finger.

It belongs to the AccD/PCCB family. In terms of assembly, acetyl-CoA carboxylase is a heterohexamer composed of biotin carboxyl carrier protein (AccB), biotin carboxylase (AccC) and two subunits each of ACCase subunit alpha (AccA) and ACCase subunit beta (AccD). Requires Zn(2+) as cofactor.

It localises to the cytoplasm. It catalyses the reaction N(6)-carboxybiotinyl-L-lysyl-[protein] + acetyl-CoA = N(6)-biotinyl-L-lysyl-[protein] + malonyl-CoA. Its pathway is lipid metabolism; malonyl-CoA biosynthesis; malonyl-CoA from acetyl-CoA: step 1/1. Its activity is regulated as follows. Inhibited by pyrrolidine dione antibiotics moiramide B (CPD1) and CPD2. Component of the acetyl coenzyme A carboxylase (ACC) complex. Biotin carboxylase (BC) catalyzes the carboxylation of biotin on its carrier protein (BCCP) and then the CO(2) group is transferred by the transcarboxylase to acetyl-CoA to form malonyl-CoA. This chain is Acetyl-coenzyme A carboxylase carboxyl transferase subunit beta, found in Bacillus subtilis (strain 168).